The primary structure comprises 464 residues: ATP-dependent protease ATPase subunit HslU (464 aa).

ATP contacts are provided by residues isoleucine 22, 64–69 (GVGKTE), aspartate 275, glutamate 340, and arginine 412.

It belongs to the ClpX chaperone family. HslU subfamily. As to quaternary structure, a double ring-shaped homohexamer of HslV is capped on each side by a ring-shaped HslU homohexamer. The assembly of the HslU/HslV complex is dependent on binding of ATP.

The protein localises to the cytoplasm. In terms of biological role, ATPase subunit of a proteasome-like degradation complex; this subunit has chaperone activity. The binding of ATP and its subsequent hydrolysis by HslU are essential for unfolding of protein substrates subsequently hydrolyzed by HslV. HslU recognizes the N-terminal part of its protein substrates and unfolds these before they are guided to HslV for hydrolysis. This Cytophaga hutchinsonii (strain ATCC 33406 / DSM 1761 / CIP 103989 / NBRC 15051 / NCIMB 9469 / D465) protein is ATP-dependent protease ATPase subunit HslU.